A 90-amino-acid polypeptide reads, in one-letter code: MFEKKNRTCLTVYLHYNRDARKLSQYGDIVYHSKRLQYVLVYMDQELVKATILKLKKERFVKKVVPSYIKELDQNFVGNLWRDEEPSVVG.

It belongs to the UPF0298 family.

Its subcellular location is the cytoplasm. This chain is UPF0298 protein SSU05_1549, found in Streptococcus suis (strain 05ZYH33).